A 360-amino-acid polypeptide reads, in one-letter code: Pyrimidine monooxygenase RutA (360 aa).

FMN-binding positions include 49 to 50 (IK), N115, E124, 140 to 141 (RY), and S190.

It belongs to the NtaA/SnaA/DszA monooxygenase family. RutA subfamily.

It carries out the reaction uracil + FMNH2 + NADH + O2 = (Z)-3-ureidoacrylate + FMN + NAD(+) + H2O + H(+). It catalyses the reaction thymine + FMNH2 + NADH + O2 = (Z)-2-methylureidoacrylate + FMN + NAD(+) + H2O + H(+). In terms of biological role, catalyzes the pyrimidine ring opening between N-3 and C-4 by an unusual flavin hydroperoxide-catalyzed mechanism, adding oxygen atoms in the process to yield ureidoacrylate peracid, that immediately reacts with FMN forming ureidoacrylate and FMN-N(5)-oxide. The FMN-N(5)-oxide reacts spontaneously with NADH to produce FMN. Requires the flavin reductase RutF to regenerate FMN in vivo. The polypeptide is Pyrimidine monooxygenase RutA (Pseudomonas savastanoi pv. phaseolicola (strain 1448A / Race 6) (Pseudomonas syringae pv. phaseolicola (strain 1448A / Race 6))).